Here is a 388-residue protein sequence, read N- to C-terminus: 2-methylene-furan-3-one reductase (388 aa).

Residues 1–60 constitute a chloroplast transit peptide; it reads MEALLSSTTLQLKPLHPPSSFSSLHSPFSSISVLRVKGSKKAETFIQRSNFSTVLPLRVS. NADP(+)-binding positions include Lys-125, 240–241, 263–266, Tyr-281, 330–332, and 377–378; these read GV, STGK, FVV, and RA. Lys-125 contributes to the substrate binding site.

It belongs to the zinc-containing alcohol dehydrogenase family. Quinone oxidoreductase subfamily. As to quaternary structure, monomer.

The protein localises to the plastid. It localises to the chloroplast. The enzyme catalyses 4-hydroxy-2,5-dimethyl-furan-3(2H)-one + NADP(+) = 4-hydroxy-5-methyl-2-methylenefuran-3(2H)-one + NADPH + H(+). Functionally, enone oxidoreductase involved in the biosynthesis of 4-hydroxy-2,5-dimethyl-3(2H)-furanone (HDMF or furaneol). Can use both NADH and NADPH as the electron donor. This chain is 2-methylene-furan-3-one reductase (EO), found in Solanum lycopersicum (Tomato).